A 317-amino-acid chain; its full sequence is Ribosomal protein L11 methyltransferase (317 aa).

Residues Thr158, Gly179, Asp201, and Asn244 each coordinate S-adenosyl-L-methionine.

It belongs to the methyltransferase superfamily. PrmA family.

Its subcellular location is the cytoplasm. The enzyme catalyses L-lysyl-[protein] + 3 S-adenosyl-L-methionine = N(6),N(6),N(6)-trimethyl-L-lysyl-[protein] + 3 S-adenosyl-L-homocysteine + 3 H(+). In terms of biological role, methylates ribosomal protein L11. The protein is Ribosomal protein L11 methyltransferase of Streptococcus pyogenes serotype M49 (strain NZ131).